The sequence spans 311 residues: Serine hydrolase-like protein (311 aa).

The region spanning 27–227 (PPVLCLHGWL…FVSKEMFVHS (201 aa)) is the AB hydrolase-1 domain. Residue Ser-102 is part of the active site. Ser-210 is subject to Phosphoserine.

The protein belongs to the AB hydrolase superfamily. In terms of tissue distribution, ubiquitous. High protein expression in skeletal and cardiac muscle.

Its subcellular location is the cytoplasm. The protein resides in the perinuclear region. It is found in the peroxisome. Probable serine hydrolase. May be related to cell muscle hypertrophy. This chain is Serine hydrolase-like protein (Serhl), found in Mus musculus (Mouse).